The primary structure comprises 338 residues: Ketol-acid reductoisomerase (NADP(+)) (338 aa).

The region spanning 1-181 (MKVFYDKDAD…GGGRAGIIET (181 aa)) is the KARI N-terminal Rossmann domain. NADP(+) is bound by residues 24–27 (YGSQ), arginine 47, and serine 52. Residue histidine 107 is part of the active site. Glycine 133 provides a ligand contact to NADP(+). A KARI C-terminal knotted domain is found at 182–327 (NFREETETDL…AKLRSMMPWI (146 aa)). Residues aspartate 190, glutamate 194, glutamate 226, and glutamate 230 each contribute to the Mg(2+) site. Residue serine 251 coordinates substrate.

This sequence belongs to the ketol-acid reductoisomerase family. Mg(2+) is required as a cofactor.

The catalysed reaction is (2R)-2,3-dihydroxy-3-methylbutanoate + NADP(+) = (2S)-2-acetolactate + NADPH + H(+). The enzyme catalyses (2R,3R)-2,3-dihydroxy-3-methylpentanoate + NADP(+) = (S)-2-ethyl-2-hydroxy-3-oxobutanoate + NADPH + H(+). It participates in amino-acid biosynthesis; L-isoleucine biosynthesis; L-isoleucine from 2-oxobutanoate: step 2/4. Its pathway is amino-acid biosynthesis; L-valine biosynthesis; L-valine from pyruvate: step 2/4. Involved in the biosynthesis of branched-chain amino acids (BCAA). Catalyzes an alkyl-migration followed by a ketol-acid reduction of (S)-2-acetolactate (S2AL) to yield (R)-2,3-dihydroxy-isovalerate. In the isomerase reaction, S2AL is rearranged via a Mg-dependent methyl migration to produce 3-hydroxy-3-methyl-2-ketobutyrate (HMKB). In the reductase reaction, this 2-ketoacid undergoes a metal-dependent reduction by NADPH to yield (R)-2,3-dihydroxy-isovalerate. The sequence is that of Ketol-acid reductoisomerase (NADP(+)) from Paraburkholderia phytofirmans (strain DSM 17436 / LMG 22146 / PsJN) (Burkholderia phytofirmans).